We begin with the raw amino-acid sequence, 335 residues long: Syntaxin-18 (335 aa).

Residues 1-309 (MAVDITLLFR…EDIREAIKNN (309 aa)) lie on the Cytoplasmic side of the membrane. The segment covering 168–208 (KLEPEPNTKTRESTSSEKVSRSPSKDSEENPATEERPEKIL) has biased composition (basic and acidic residues). The segment at 168 to 226 (KLEPEPNTKTRESTSSEKVSRSPSKDSEENPATEERPEKILAETQPELGTWGDGKGEDE) is disordered. The t-SNARE coiled-coil homology domain occupies 243-305 (IGEMNSLFDE…KEGNEDIREA (63 aa)). A helical; Anchor for type IV membrane protein membrane pass occupies residues 310–330 (AGFRVWILFFLVMCSFSLLFL). The Vesicular portion of the chain corresponds to 331 to 335 (DWYDS).

Belongs to the syntaxin family. In terms of assembly, component of a SNARE complex consisting of STX18, USE1L, BNIP1/SEC20L, and SEC22B. RINT1/TIP20L and ZW10 are associated with the complex through interaction with BNIP1/SEC20L. Interacts directly with USE1L and BNIP1/SEC20L.

The protein localises to the endoplasmic reticulum membrane. It localises to the golgi apparatus membrane. In terms of biological role, syntaxin that may be involved in targeting and fusion of Golgi-derived retrograde transport vesicles with the ER. The protein is Syntaxin-18 (STX18) of Pongo abelii (Sumatran orangutan).